An 88-amino-acid polypeptide reads, in one-letter code: Small cysteine-rich outer membrane protein OmcA (88 aa).

A signal peptide spans 1–18 (MKKTALLAALCSVVSLSS). Cys19 carries the N-palmitoyl cysteine lipid modification. Cys19 carries the S-diacylglycerol cysteine lipid modification.

In terms of assembly, part of a disulfide cross-linked outer membrane complex (COMC) composed of the major outer membrane porin (MOMP), the small cysteine-rich protein (OmcA) and the large cysteine-rich periplasmic protein (OmcB).

The protein localises to the cell outer membrane. In elementary bodies (EBs, the infectious stage, which is able to survive outside the host cell) provides the structural integrity of the outer envelope through disulfide cross-links with the large cysteine-rich periplasmic protein and the major outer membrane porin. It has been described in publications as the Sarkosyl-insoluble COMC (Chlamydia outer membrane complex), and serves as the functional equivalent of peptidoglycan. This is Small cysteine-rich outer membrane protein OmcA (omcA) from Chlamydia trachomatis serovar B (strain Jali20/OT).